A 208-amino-acid polypeptide reads, in one-letter code: Ciliary-associated calcium-binding coiled-coil protein 1 (208 aa).

Testis-specific. Expressed in spermatocytes and round spermatids (at protein level).

It is found in the cytoplasm. It localises to the cytoskeleton. The protein localises to the microtubule organizing center. Its subcellular location is the centrosome. The protein resides in the cell projection. It is found in the cilium. It localises to the flagellum. Calcium-binding protein. May be involved in the control of sperm flagellar movement. This is Ciliary-associated calcium-binding coiled-coil protein 1 from Mus musculus (Mouse).